A 132-amino-acid polypeptide reads, in one-letter code: Small ribosomal subunit protein eS6 (132 aa).

The protein belongs to the eukaryotic ribosomal protein eS6 family.

The sequence is that of Small ribosomal subunit protein eS6 from Methanosphaerula palustris (strain ATCC BAA-1556 / DSM 19958 / E1-9c).